The chain runs to 180 residues: Trafficking protein particle complex subunit 3 (180 aa).

The S-palmitoyl cysteine moiety is linked to residue Cys68.

Belongs to the TRAPP small subunits family. BET3 subfamily. Homodimer. Component of the multisubunit transport protein particle (TRAPP) complex, which includes at least TRAPPC2, TRAPPC2L, TRAPPC3, TRAPPC3L, TRAPPC4, TRAPPC5, TRAPPC8, TRAPPC9, TRAPPC10, TRAPPC11 and TRAPPC12. Heterodimer with TRAPPC6A. The heterodimer TRAPPC3-TRAPPC6A interacts with TRAPPC2L. Heterodimer with TRAPPC6b. The heterodimer TRAPPC6B-TRAPPC3 interacts with TRAPPC1 likely providing a core for TRAPP complex formation.

The protein localises to the golgi apparatus. The protein resides in the cis-Golgi network. It is found in the endoplasmic reticulum. In terms of biological role, may play a role in vesicular transport from endoplasmic reticulum to Golgi. The chain is Trafficking protein particle complex subunit 3 from Homo sapiens (Human).